Consider the following 73-residue polypeptide: Putative defensin-like protein 42 (73 aa).

Disulfide bonds link cysteine 6-cysteine 58, cysteine 18-cysteine 41, cysteine 27-cysteine 50, and cysteine 31-cysteine 52.

It belongs to the DEFL family.

The sequence is that of Putative defensin-like protein 42 from Arabidopsis thaliana (Mouse-ear cress).